Here is a 104-residue protein sequence, read N- to C-terminus: T-complex protein 1 subunit zeta (104 aa).

An ADP-binding site is contributed by Gly24. Residue Gly24 coordinates ATP. Residue Asp75 coordinates Mg(2+). ADP contacts are provided by Gly76, Thr78, and Ser79. Gly76 and Thr78 together coordinate ATP.

Belongs to the TCP-1 chaperonin family. As to quaternary structure, component of the chaperonin-containing T-complex (TRiC), a hexadecamer composed of two identical back-to-back stacked rings enclosing a protein folding chamber. Each ring is made up of eight different subunits: TCP1/CCT1, CCT2, CCT3, CCT4, CCT5, CCT6A/CCT6, CCT7, CCT8. Interacts with PACRG.

It localises to the cytoplasm. It carries out the reaction ATP + H2O = ADP + phosphate + H(+). In terms of biological role, component of the chaperonin-containing T-complex (TRiC), a molecular chaperone complex that assists the folding of actin, tubulin and other proteins upon ATP hydrolysis. The TRiC complex mediates the folding of WRAP53/TCAB1, thereby regulating telomere maintenance. This chain is T-complex protein 1 subunit zeta (CCT6), found in Sus scrofa (Pig).